Consider the following 291-residue polypeptide: Phosphate import ATP-binding protein PstB (291 aa).

Over residues Met1–Gln17 the composition is skewed to basic and acidic residues. Positions Met1 to Asn40 are disordered. The span at Ser18–Asn29 shows a compositional bias: polar residues. The span at Glu30–Asn40 shows a compositional bias: basic and acidic residues. One can recognise an ABC transporter domain in the interval Tyr45–Ile286. Gly77–Ser84 provides a ligand contact to ATP.

It belongs to the ABC transporter superfamily. Phosphate importer (TC 3.A.1.7) family. The complex is composed of two ATP-binding proteins (PstB), two transmembrane proteins (PstC and PstA) and a solute-binding protein (PstS).

The protein resides in the cell membrane. It carries out the reaction phosphate(out) + ATP + H2O = ADP + 2 phosphate(in) + H(+). Its function is as follows. Part of the ABC transporter complex PstSACB involved in phosphate import. Responsible for energy coupling to the transport system. The polypeptide is Phosphate import ATP-binding protein PstB (Staphylococcus haemolyticus (strain JCSC1435)).